A 155-amino-acid chain; its full sequence is Small ribosomal subunit protein bS16 (155 aa).

A disordered region spans residues 113–155 (ADGAPTGEAIQQKKKKAPKKAEAAEAEAPAEEPAAESADAASE). Acidic residues predominate over residues 136-146 (AEAEAPAEEPA).

This sequence belongs to the bacterial ribosomal protein bS16 family.

The protein is Small ribosomal subunit protein bS16 of Mycobacteroides abscessus (strain ATCC 19977 / DSM 44196 / CCUG 20993 / CIP 104536 / JCM 13569 / NCTC 13031 / TMC 1543 / L948) (Mycobacterium abscessus).